Reading from the N-terminus, the 619-residue chain is Chaperone protein DnaK (619 aa).

A Phosphothreonine; by autocatalysis modification is found at Thr-179. Residues 584–619 (QAKAQGAAGPQPGAQAQGQPNDGGKEDVVEAEVVDK) are disordered. The span at 585–605 (AKAQGAAGPQPGAQAQGQPND) shows a compositional bias: low complexity. Residues 606-619 (GGKEDVVEAEVVDK) show a composition bias toward basic and acidic residues.

This sequence belongs to the heat shock protein 70 family.

Acts as a chaperone. The polypeptide is Chaperone protein DnaK (Elusimicrobium minutum (strain Pei191)).